The primary structure comprises 401 residues: All trans-polyprenyl-diphosphate synthase PDSS2 (401 aa).

Belongs to the FPP/GGPP synthase family. As to quaternary structure, heterotetramer composed of 2 PDSS1/DPS1 and 2 PDSS2/DLP1 subunits.

Its subcellular location is the mitochondrion. It catalyses the reaction 7 isopentenyl diphosphate + (2E,6E)-farnesyl diphosphate = all-trans-decaprenyl diphosphate + 7 diphosphate. The catalysed reaction is 6 isopentenyl diphosphate + (2E,6E)-farnesyl diphosphate = all-trans-nonaprenyl diphosphate + 6 diphosphate. It participates in cofactor biosynthesis; ubiquinone biosynthesis. In terms of biological role, heterotetrameric enzyme that catalyzes the condensation of farnesyl diphosphate (FPP), which acts as a primer, and isopentenyl diphosphate (IPP) to produce prenyl diphosphates of varying chain lengths and participates in the determination of the side chain of ubiquinone. Supplies nona and decaprenyl diphosphate, the precursors for the side chain of the isoprenoid quinones ubiquinone-9 (Q9) and ubiquinone-10 (Q10) respectively. The enzyme adds isopentenyl diphosphate molecules sequentially to farnesyl diphosphate with trans stereochemistry. May play a role during cerebellar development. May regulate mitochondrial respiratory chain function. The protein is All trans-polyprenyl-diphosphate synthase PDSS2 of Mus musculus (Mouse).